The primary structure comprises 191 residues: Orotate phosphoribosyltransferase (191 aa).

A 5-phospho-alpha-D-ribose 1-diphosphate-binding site is contributed by 116–124 (EDVVTTGGS). 2 residues coordinate orotate: threonine 120 and arginine 148.

Belongs to the purine/pyrimidine phosphoribosyltransferase family. PyrE subfamily. In terms of assembly, homodimer. The cofactor is Mg(2+).

The catalysed reaction is orotidine 5'-phosphate + diphosphate = orotate + 5-phospho-alpha-D-ribose 1-diphosphate. Its pathway is pyrimidine metabolism; UMP biosynthesis via de novo pathway; UMP from orotate: step 1/2. Its function is as follows. Catalyzes the transfer of a ribosyl phosphate group from 5-phosphoribose 1-diphosphate to orotate, leading to the formation of orotidine monophosphate (OMP). The polypeptide is Orotate phosphoribosyltransferase (Heliobacterium modesticaldum (strain ATCC 51547 / Ice1)).